Reading from the N-terminus, the 152-residue chain is Snaclec agkisacutacin subunit A (152 aa).

The N-terminal stretch at 1 to 23 (MGRFIFVSFGLLVVFLSLSGTAA) is a signal peptide. The region spanning 24–152 (DCSSGWSSYE…EQQDPFVCEA (129 aa)) is the C-type lectin domain. Intrachain disulfides connect cysteine 25–cysteine 36, cysteine 53–cysteine 150, and cysteine 125–cysteine 142. Residues serine 64, glutamate 66, and glutamate 70 each coordinate Ca(2+). Glutamate 151 is a Ca(2+) binding site.

Belongs to the snaclec family. Heterodimer with subunit B of AaACP or agkisacutacin; disulfide-linked. Expressed by the venom gland.

It localises to the secreted. In terms of biological role, anticoagulant protein which binds to the gamma-carboxyglutamic acid-domain regions of factors IX (F9) and factor X (F10) in the presence of calcium with a 1 to 1 stoichiometry. Also inhibits platelet aggregation by binding to platelet glycoprotein Ibalpha (GP1BA) and functioning as a blocker of von Willebrand factor (VWF). Is devoid of hemorrhagic and lethal activities. Possesses antithrombotic and thrombolytic activities. Also hydrolyzes the Aalpha-chain of fibrinogen (FGA). Does not affect the Bbeta-chain (FGB) and the gamma chain (FGG). This is Snaclec agkisacutacin subunit A from Deinagkistrodon acutus (Hundred-pace snake).